The following is a 220-amino-acid chain: Flavin-dependent thymidylate synthase (220 aa).

The ThyX domain occupies 1-208 (MKIDILDKGF…PWTFEAFLKY (208 aa)). FAD is bound by residues Thr55, 78 to 81 (RHRI), and Glu86. DUMP-binding positions include 75–78 (QWFR), 86–90 (ELSGR), and Arg147. The short motif at 78 to 88 (RHRIASYNELS) is the ThyX motif element. FAD is bound by residues 163–165 (NAR) and Asn169. Arg174 contributes to the dUMP binding site. Arg174 functions as the Involved in ionization of N3 of dUMP, leading to its activation in the catalytic mechanism.

The protein belongs to the thymidylate synthase ThyX family. Homotetramer. FAD is required as a cofactor.

It carries out the reaction dUMP + (6R)-5,10-methylene-5,6,7,8-tetrahydrofolate + NADPH + H(+) = dTMP + (6S)-5,6,7,8-tetrahydrofolate + NADP(+). It catalyses the reaction dUMP + formaldehyde + NADPH + H(+) = dTMP + NADP(+) + H2O. Its pathway is pyrimidine metabolism; dTTP biosynthesis. Its function is as follows. Catalyzes the reductive methylation of 2'-deoxyuridine-5'-monophosphate (dUMP or deoxyuridylate) to 2'-deoxythymidine-5'-monophosphate (dTMP or deoxythymidylate) while utilizing 5,10-methylenetetrahydrofolate (mTHF) as the methylene donor, and NAD(P)H and FADH(2) as the reductant. This reaction is a critical step in DNA biosynthesis. Can also use formaldehyde instead of mTHF as a direct methylene donor for dTMP synthesis. However, the tighter binding of ThyX to mTHF (KD of 4 uM) compared to formaldehyde (KD of 20 mM) confirms that methylene tetrahydrofolate acts as the biological carbon donor for ThyX, serving as a formaldehyde carrier/transporter and thus avoiding genotoxic effects. This Thermotoga maritima (strain ATCC 43589 / DSM 3109 / JCM 10099 / NBRC 100826 / MSB8) protein is Flavin-dependent thymidylate synthase.